Consider the following 311-residue polypeptide: Ribosomal protein L11 methyltransferase (311 aa).

Threonine 162, glycine 183, aspartate 205, and asparagine 248 together coordinate S-adenosyl-L-methionine.

This sequence belongs to the methyltransferase superfamily. PrmA family.

Its subcellular location is the cytoplasm. It carries out the reaction L-lysyl-[protein] + 3 S-adenosyl-L-methionine = N(6),N(6),N(6)-trimethyl-L-lysyl-[protein] + 3 S-adenosyl-L-homocysteine + 3 H(+). Functionally, methylates ribosomal protein L11. The sequence is that of Ribosomal protein L11 methyltransferase from Bacillus subtilis (strain 168).